The chain runs to 99 residues: Large ribosomal subunit protein uL23 (99 aa).

It belongs to the universal ribosomal protein uL23 family. In terms of assembly, part of the 50S ribosomal subunit. Contacts protein L29, and trigger factor when it is bound to the ribosome.

One of the early assembly proteins it binds 23S rRNA. One of the proteins that surrounds the polypeptide exit tunnel on the outside of the ribosome. Forms the main docking site for trigger factor binding to the ribosome. The chain is Large ribosomal subunit protein uL23 from Pseudomonas entomophila (strain L48).